Consider the following 369-residue polypeptide: Serpentine receptor class epsilon-45 (369 aa).

A run of 8 helical transmembrane segments spans residues 1 to 21 (MIFLIGNSTSNYTVCFPIFIL), 39 to 59 (FVLTFVSFYYVIKCCYVAIHI), 67 to 87 (TVLLIILMIQWFEGLLSNILI), 127 to 147 (FFLGGFLKWHYILSMITTLLV), 169 to 191 (GLFFMLVVGQTSTNLVMGYLFFF), 195 to 217 (HFAVGFSIILSTNIIAMGIFTYV), 258 to 278 (VIHAGLFLILTACFVNLFMYL), and 291 to 311 (IFESAINLNPVVIVPTLLGSV).

The protein belongs to the nematode receptor-like protein sre family.

The protein localises to the membrane. The chain is Serpentine receptor class epsilon-45 (sre-45) from Caenorhabditis elegans.